A 288-amino-acid chain; its full sequence is MAEKKQWHETLHDQFGQYFAVDNVLYHEKTDHQDLIIFENAAFGRVMALDGVVQTTERDEFIYHEMMTHVPLLAHGHAKHVLIIGGGDGAMLREVTRHKNVESITMVEIDAGVVSFCRQYLPNHNAGSYDDPRFKLVIDDGVNFVNQTSQTFDVIISDCTDPIGPGESLFTSAFYEGCKRCLNPGGIFVAQNGVCFLQQEEAIDSHRKLSHYFSDVGFYQAAIPTYYGGIMTFAWATDNDALRHLSTEIIQARFLASGLKCRYYNPAIHTAAFALPQYLQDALASQPS.

Positions 9–238 (ETLHDQFGQY…GIMTFAWATD (230 aa)) constitute a PABS domain. An S-methyl-5'-thioadenosine-binding site is contributed by Gln33. Spermidine-binding residues include His64 and Asp88. Residues Glu108 and 140–141 (DG) each bind S-methyl-5'-thioadenosine. The Proton acceptor role is filled by Asp158. Residue 158–161 (DCTD) coordinates spermidine. Pro165 is an S-methyl-5'-thioadenosine binding site.

The protein belongs to the spermidine/spermine synthase family. As to quaternary structure, homodimer or homotetramer.

The protein localises to the cytoplasm. The enzyme catalyses S-adenosyl 3-(methylsulfanyl)propylamine + putrescine = S-methyl-5'-thioadenosine + spermidine + H(+). It functions in the pathway amine and polyamine biosynthesis; spermidine biosynthesis; spermidine from putrescine: step 1/1. Functionally, catalyzes the irreversible transfer of a propylamine group from the amino donor S-adenosylmethioninamine (decarboxy-AdoMet) to putrescine (1,4-diaminobutane) to yield spermidine. The sequence is that of Polyamine aminopropyltransferase from Escherichia coli (strain ATCC 8739 / DSM 1576 / NBRC 3972 / NCIMB 8545 / WDCM 00012 / Crooks).